Here is a 72-residue protein sequence, read N- to C-terminus: uncharacterized protein (72 aa).

The chain crosses the membrane as a helical span at residues 41–58 (FSFLVHIMCGLTLTSYVI).

Its subcellular location is the membrane. This is an uncharacterized protein from Dictyostelium discoideum (Social amoeba).